Consider the following 419-residue polypeptide: Transcription regulator lscL (419 aa).

The zn(2)-C6 fungal-type DNA-binding region spans 12 to 35 (RIRKVKCDEKKPCCQKCIDTGRTC).

The protein localises to the nucleus. In terms of biological role, transcription factor that may coregulate the expression of the gene cluster that mediates the biosynthesis of the lipopeptide antibiotics leucinostatins that show extensive biological activities, including antimalarial, antiviral, antibacterial, antifungal, and antitumor activities, as well as phytotoxic. This Purpureocillium lilacinum (Paecilomyces lilacinus) protein is Transcription regulator lscL.